The primary structure comprises 99 residues: NADH-quinone oxidoreductase subunit K (99 aa).

Transmembrane regions (helical) follow at residues 3 to 23, 28 to 48, and 59 to 79; these read PANYLILSALLFTIGTVGVLV, IVVFMSIELMLNAVNLTLVTF, and VMAFFVMVVAAAEVVIGLAII.

It belongs to the complex I subunit 4L family. As to quaternary structure, NDH-1 is composed of 14 different subunits. Subunits NuoA, H, J, K, L, M, N constitute the membrane sector of the complex.

It is found in the cell membrane. The enzyme catalyses a quinone + NADH + 5 H(+)(in) = a quinol + NAD(+) + 4 H(+)(out). Its function is as follows. NDH-1 shuttles electrons from NADH, via FMN and iron-sulfur (Fe-S) centers, to quinones in the respiratory chain. The immediate electron acceptor for the enzyme in this species is believed to be a menaquinone. Couples the redox reaction to proton translocation (for every two electrons transferred, four hydrogen ions are translocated across the cytoplasmic membrane), and thus conserves the redox energy in a proton gradient. This chain is NADH-quinone oxidoreductase subunit K, found in Frankia alni (strain DSM 45986 / CECT 9034 / ACN14a).